A 436-amino-acid chain; its full sequence is Trigger factor (436 aa).

The region spanning 161 to 246 (EDQLNIDFVG…VNSVSEPKLP (86 aa)) is the PPIase FKBP-type domain.

It belongs to the FKBP-type PPIase family. Tig subfamily.

The protein resides in the cytoplasm. The catalysed reaction is [protein]-peptidylproline (omega=180) = [protein]-peptidylproline (omega=0). In terms of biological role, involved in protein export. Acts as a chaperone by maintaining the newly synthesized protein in an open conformation. Functions as a peptidyl-prolyl cis-trans isomerase. In Pseudomonas fluorescens (strain SBW25), this protein is Trigger factor.